The primary structure comprises 189 residues: Peroxiredoxin sll1621 (189 aa).

A Thioredoxin domain is found at 2–177 (TPERVPSVVF…MLAYLKGAEA (176 aa)). The active-site Cysteine sulfenic acid (-SOH) intermediate (for peroxiredoxin activity) is the Cys-55.

This sequence belongs to the peroxiredoxin family. Prx5 subfamily. In terms of assembly, monomer.

The enzyme catalyses a hydroperoxide + 2 glutathione = an alcohol + glutathione disulfide + H2O. Thiol-specific peroxidase that catalyzes the reduction of hydrogen peroxide and organic hydroperoxides to water and alcohols, respectively. Plays a role in cell protection against oxidative stress by detoxifying peroxides. In Synechocystis sp. (strain ATCC 27184 / PCC 6803 / Kazusa), this protein is Peroxiredoxin sll1621.